The primary structure comprises 203 residues: Holliday junction branch migration complex subunit RuvA (203 aa).

The tract at residues methionine 1–isoleucine 64 is domain I. The tract at residues glycine 65–alanine 143 is domain II. The segment at leucine 144–glycine 154 is flexible linker. The segment at glutamine 155–isoleucine 203 is domain III.

It belongs to the RuvA family. Homotetramer. Forms an RuvA(8)-RuvB(12)-Holliday junction (HJ) complex. HJ DNA is sandwiched between 2 RuvA tetramers; dsDNA enters through RuvA and exits via RuvB. An RuvB hexamer assembles on each DNA strand where it exits the tetramer. Each RuvB hexamer is contacted by two RuvA subunits (via domain III) on 2 adjacent RuvB subunits; this complex drives branch migration. In the full resolvosome a probable DNA-RuvA(4)-RuvB(12)-RuvC(2) complex forms which resolves the HJ.

The protein localises to the cytoplasm. Functionally, the RuvA-RuvB-RuvC complex processes Holliday junction (HJ) DNA during genetic recombination and DNA repair, while the RuvA-RuvB complex plays an important role in the rescue of blocked DNA replication forks via replication fork reversal (RFR). RuvA specifically binds to HJ cruciform DNA, conferring on it an open structure. The RuvB hexamer acts as an ATP-dependent pump, pulling dsDNA into and through the RuvAB complex. HJ branch migration allows RuvC to scan DNA until it finds its consensus sequence, where it cleaves and resolves the cruciform DNA. The protein is Holliday junction branch migration complex subunit RuvA of Pseudomonas fluorescens (strain SBW25).